The following is a 484-amino-acid chain: Zinc metalloproteinase-disintegrin BlatH1 (484 aa).

Residues 1–20 form the signal peptide; that stretch reads MIQVLLVTICLAALPYQGSS. Positions 21 to 190 are excised as a propeptide; it reads IILESGNVND…KKASQSNLTP (170 aa). The residue at position 191 (glutamate 191) is a Pyrrolidone carboxylic acid (Glu). Residues 199-395 form the Peptidase M12B domain; sequence KYVELVIVAD…QNSQCILNEP (197 aa). Glutamate 202 contacts Ca(2+). Asparagine 259 is a glycosylation site (N-linked (GlcNAc...) asparagine). Position 286 (aspartate 286) interacts with Ca(2+). Asparagine 297 is a glycosylation site (N-linked (GlcNAc...) asparagine). Disulfide bonds link cysteine 310/cysteine 390, cysteine 350/cysteine 374, and cysteine 352/cysteine 357. Residue histidine 335 coordinates Zn(2+). Glutamate 336 is an active-site residue. Zn(2+) is bound by residues histidine 339 and histidine 345. Asparagine 373 carries an N-linked (GlcNAc...) asparagine glycan. Ca(2+) is bound by residues cysteine 390, asparagine 393, valine 405, asparagine 408, glutamate 412, glutamate 415, and aspartate 418. Residues 403–484 form the Disintegrin domain; that stretch reads PPVCGNEILE…GQSADCPSNG (82 aa). Intrachain disulfides connect cysteine 406-cysteine 425, cysteine 417-cysteine 435, cysteine 419-cysteine 430, cysteine 429-cysteine 452, cysteine 443-cysteine 449, cysteine 448-cysteine 473, and cysteine 461-cysteine 480. Positions 465-467 match the TDN-tripeptide motif; that stretch reads TDN.

It belongs to the venom metalloproteinase (M12B) family. P-II subfamily. P-IIc sub-subfamily. In terms of assembly, homodimer. Requires Zn(2+) as cofactor. The N-terminus is blocked. As to expression, expressed by the venom gland.

The protein localises to the secreted. Platelet aggregation in inhibited by the metalloproteinase inhibitors EDTA and Batimastat. The hemorrhagic activity is not inhibited by the plasma proteinase inhibitor alpha2-macroglobulin, although the SVMP is able to cleave this plasma inhibitor, generating a 90 kDa product. Its function is as follows. Snake venom zinc metalloprotease-disintegrin that hydrolyzes azocasein, gelatin and fibrinogen (Aalpha and Bbeta chains and partially gamma-chain), and exerts a potent local and systemic hemorrhagic activity in mice. It inhibits ADP- and collagen-induced human platelet aggregation (IC(50) = 0.3 uM and 0.7 uM for ADP and collagen, respectively). This inhibition is dependent of protease activity, and probably occurs through the degradation of an unknown platelet receptor. This is Zinc metalloproteinase-disintegrin BlatH1 from Bothriechis lateralis (Side-striped palm pitviper).